Consider the following 268-residue polypeptide: Tryptophan synthase alpha chain (268 aa).

Active-site proton acceptor residues include Glu-49 and Asp-60.

The protein belongs to the TrpA family. Tetramer of two alpha and two beta chains.

It catalyses the reaction (1S,2R)-1-C-(indol-3-yl)glycerol 3-phosphate + L-serine = D-glyceraldehyde 3-phosphate + L-tryptophan + H2O. It functions in the pathway amino-acid biosynthesis; L-tryptophan biosynthesis; L-tryptophan from chorismate: step 5/5. Its function is as follows. The alpha subunit is responsible for the aldol cleavage of indoleglycerol phosphate to indole and glyceraldehyde 3-phosphate. The polypeptide is Tryptophan synthase alpha chain (Yersinia pseudotuberculosis serotype O:3 (strain YPIII)).